Here is a 476-residue protein sequence, read N- to C-terminus: Flavin-dependent halogenase otaD (476 aa).

Residues glycine 14 and glycine 17 each contribute to the FAD site. Positions 304 and 305 each coordinate chloride. Valine 306 is a binding site for FAD.

The protein belongs to the flavin-dependent halogenase family.

It catalyses the reaction ochratoxin B + FADH2 + chloride + O2 = ochratoxin A + FAD + 2 H2O. The protein operates within mycotoxin biosynthesis. Functionally, flavin-dependent halogenase; part of the gene cluster that mediates the biosynthesis of ochratoxin A (OTA), a mycotoxin composed of a chlorinated type I polyketide dihydroisocoumarin moiety linked to L-phenylalanine, and demonstrated to have nephrotoxic, immunotoxic, genotoxic, neurotoxic, and teratogenic properties. OtaD chlorinates ochratoxin B (OTB) at the C-5 position to form OTA. The pathway begins with the highly reducing polyketide synthase otaA that catalyzes the formation of the isocoumarin group during the initial stages of biosynthesis, starting from one acetate and 4 malonate units, to originate the characteristic pentaketide skeleton 7-methylmellein (7-MM) of the OTA molecule. The newly identified cyclase otaY might be involved in the polyketide cyclization reaction during the initial steps of the OTA biosynthesis. 7-MM is then oxidized into 7-carboxymellein (also called ochratoxin beta) by the cytochrome P450 monooxygenase otaC. The NRPS encoded by the otaB gene is involved in the linking of phenylalanine to the dihydroisocoumarin ring. The reaction catalyzed by NRPS results in the production of ochratoxin B (OTB), which is the non-chlorinated analog of OTA and which subsequently serves as the substrate of the halogenase otaD for chlorination activity to form the final molecular structure of OTA, containing a chlorine atom in the C-5 position of the molecule. The sequence is that of Flavin-dependent halogenase otaD from Aspergillus niger (strain ATCC MYA-4892 / CBS 513.88 / FGSC A1513).